The primary structure comprises 745 residues: Elongation factor G, mitochondrial (745 aa).

Positions 40–317 (ERIRNIGISA…AVLDYLPNPG (278 aa)) constitute a tr-type G domain. Residues 49-56 (AHIDSGKT), 116-120 (DTPGH), and 170-173 (NKLD) contribute to the GTP site.

The protein belongs to the TRAFAC class translation factor GTPase superfamily. Classic translation factor GTPase family. EF-G/EF-2 subfamily.

The protein resides in the mitochondrion. It participates in protein biosynthesis; polypeptide chain elongation. In terms of biological role, mitochondrial GTPase that catalyzes the GTP-dependent ribosomal translocation step during translation elongation. During this step, the ribosome changes from the pre-translocational (PRE) to the post-translocational (POST) state as the newly formed A-site-bound peptidyl-tRNA and P-site-bound deacylated tRNA move to the P and E sites, respectively. Catalyzes the coordinated movement of the two tRNA molecules, the mRNA and conformational changes in the ribosome. Essential during development as it acts as a retrograde signal from mitochondria to the nucleus to slow down cell proliferation if mitochondrial energy output is low. The polypeptide is Elongation factor G, mitochondrial (Drosophila yakuba (Fruit fly)).